A 158-amino-acid polypeptide reads, in one-letter code: Cyclic pyranopterin monophosphate synthase (158 aa).

Substrate-binding positions include 76-78 (MCH) and 114-115 (ME). Asp129 is a catalytic residue.

The protein belongs to the MoaC family. Homohexamer; trimer of dimers.

The catalysed reaction is (8S)-3',8-cyclo-7,8-dihydroguanosine 5'-triphosphate = cyclic pyranopterin phosphate + diphosphate. Its pathway is cofactor biosynthesis; molybdopterin biosynthesis. Functionally, catalyzes the conversion of (8S)-3',8-cyclo-7,8-dihydroguanosine 5'-triphosphate to cyclic pyranopterin monophosphate (cPMP). The sequence is that of Cyclic pyranopterin monophosphate synthase from Clostridium perfringens (strain 13 / Type A).